The sequence spans 549 residues: Ceramide kinase 1 (549 aa).

Residues 162–316 form the DAGKc domain; that stretch reads NRPKNIIIFI…VDVCTVHQHQ (155 aa). Residues 172 to 174 and 205 to 209 contribute to the ATP site; these read NPF and TERAN. Position 233–236 (233–236) interacts with substrate; sequence GGDG. The active-site Proton donor/acceptor is Asp235. ATP contacts are provided by residues Glu240, 277 to 279, Arg342, Arg348, and 500 to 502; these read GSA and DGE.

The enzyme catalyses an N-acylsphing-4-enine + ATP = an N-acylsphing-4-enine 1-phosphate + ADP + H(+). It catalyses the reaction an N-acyl-15-methylhexadecasphing-4-enine + ATP = an N-acyl-15-methylhexadecasphing-4-enine-1-phosphate + ADP + H(+). Its pathway is lipid metabolism; sphingolipid metabolism. Catalyzes the phosphorylation of ceramide to form ceramide 1-phosphate. C.elegans contain specific sphingoid bases, which are unique or different in structure compared to the sphingoid bases found in other animals. Two examples of these distinctive compounds are: 15-methylhexadecasphinganine and 15-methylhexadecasphing-4-enine. This Caenorhabditis elegans protein is Ceramide kinase 1.